A 2959-amino-acid chain; its full sequence is uncharacterized protein (2959 aa).

It localises to the virion. This is an uncharacterized protein from Acanthamoeba polyphaga mimivirus (APMV).